A 106-amino-acid chain; its full sequence is MILTTADTLGKREIIEYKGLVTGIIVRTPTITQGILGGLKNIIGGKNTSYTNVCKEARLHAEQEMINQAQELGANAIVAIRYDSSSLGGTTSGTEVFCYGTAVVIR.

This sequence belongs to the UPF0145 family.

In Francisella philomiragia subsp. philomiragia (strain ATCC 25017 / CCUG 19701 / FSC 153 / O#319-036), this protein is UPF0145 protein Fphi_1781.